Here is a 196-residue protein sequence, read N- to C-terminus: uncharacterized protein (196 aa).

This is an uncharacterized protein from Methanocaldococcus jannaschii (strain ATCC 43067 / DSM 2661 / JAL-1 / JCM 10045 / NBRC 100440) (Methanococcus jannaschii).